Consider the following 238-residue polypeptide: uncharacterized protein (238 aa).

The signal sequence occupies residues 1–28 (MSRNSRGSGRYVFVVLACVFGYTRAVHA).

This is an uncharacterized protein from Treponema pallidum (strain Nichols).